The chain runs to 263 residues: Phosphatidylglycerol--prolipoprotein diacylglyceryl transferase (263 aa).

4 helical membrane-spanning segments follow: residues 10-30 (VAIT…LFGF), 56-76 (MVTY…ILFY), 91-111 (IWNG…AMWL), and 117-137 (GLGF…GLFF). R139 serves as a coordination point for a 1,2-diacyl-sn-glycero-3-phospho-(1'-sn-glycerol). 3 helical membrane passes run 171 to 191 (PSQL…LWVF), 199 to 219 (GHVS…VEFV), and 231 to 251 (FGWL…GLWL).

This sequence belongs to the Lgt family.

The protein localises to the cell inner membrane. The catalysed reaction is L-cysteinyl-[prolipoprotein] + a 1,2-diacyl-sn-glycero-3-phospho-(1'-sn-glycerol) = an S-1,2-diacyl-sn-glyceryl-L-cysteinyl-[prolipoprotein] + sn-glycerol 1-phosphate + H(+). Its pathway is protein modification; lipoprotein biosynthesis (diacylglyceryl transfer). In terms of biological role, catalyzes the transfer of the diacylglyceryl group from phosphatidylglycerol to the sulfhydryl group of the N-terminal cysteine of a prolipoprotein, the first step in the formation of mature lipoproteins. This chain is Phosphatidylglycerol--prolipoprotein diacylglyceryl transferase, found in Nitratidesulfovibrio vulgaris (strain ATCC 29579 / DSM 644 / CCUG 34227 / NCIMB 8303 / VKM B-1760 / Hildenborough) (Desulfovibrio vulgaris).